The primary structure comprises 228 residues: Translin (228 aa).

Positions 86–90 (RFHEH) are DNA/RNA binding. A leucine-zipper region spans residues 177 to 198 (LDSGFRLLNLKNDSLRKRYDGL). The residue at position 187 (lysine 187) is an N6-acetyllysine. Serine 190 is subject to Phosphoserine. Residue lysine 199 is modified to N6-acetyllysine.

Belongs to the translin family. Ring-shaped heterooctamer of six TSN and two TSNAX subunits, DNA/RNA binding occurs inside the ring.

It is found in the cytoplasm. It localises to the nucleus. Functionally, DNA-binding protein that specifically recognizes consensus sequences at the breakpoint junctions in chromosomal translocations, mostly involving immunoglobulin (Ig)/T-cell receptor gene segments. Seems to recognize single-stranded DNA ends generated by staggered breaks occurring at recombination hot spots. Its function is as follows. Exhibits both single-stranded and double-stranded endoribonuclease activity. May act as an activator of RNA-induced silencing complex (RISC) by facilitating endonucleolytic cleavage of the siRNA passenger strand. The polypeptide is Translin (TSN) (Pongo abelii (Sumatran orangutan)).